The chain runs to 486 residues: High-affinity iron permease fer2 (486 aa).

2 helical membrane passes run 76-96 (IVLLGALTGLLIAFAIGAAFL) and 113-133 (LWEGIFNLVAVLLITPMSLAI). N-linked (GlcNAc...) asparagine glycosylation is present at N174. The tract at residues 175–209 (HSDDSASASSSSARQAAEEEAGTKTTRTEKLNPLE) is disordered. A compositionally biased stretch (low complexity) spans 179 to 189 (SASASSSSARQ). 3 helical membrane passes run 252 to 272 (ALFTIPLITTLREGLEGVVFI), 283 to 303 (SIPLPAIVGLAVGLGIGFLIF), and 308 to 328 (LVSVRIFLVFSTCFLLLIASG). N-linked (GlcNAc...) asparagine glycosylation is present at N393. Residues 400–420 (SVFMYIGYWFAVAGYLWYQIW) form a helical membrane-spanning segment. N-linked (GlcNAc...) asparagine glycosylation is present at N438. The tract at residues 441 to 486 (IQARQRKQEKAHQRQLREADQEEHGHSSNSDKQQHPSEAGPSTLSH) is disordered. The span at 446 to 466 (RKQEKAHQRQLREADQEEHGH) shows a compositional bias: basic and acidic residues.

This sequence belongs to the oxidase-dependent Fe transporter (OFeT) (TC 9.A.10.1) family.

Its subcellular location is the cell membrane. Its function is as follows. Permease for high affinity iron uptake. The protein is High-affinity iron permease fer2 of Mycosarcoma maydis (Corn smut fungus).